The chain runs to 1343 residues: DNA-directed RNA polymerase subunit beta (1343 aa).

This sequence belongs to the RNA polymerase beta chain family. As to quaternary structure, the RNAP catalytic core consists of 2 alpha, 1 beta, 1 beta' and 1 omega subunit. When a sigma factor is associated with the core the holoenzyme is formed, which can initiate transcription.

It carries out the reaction RNA(n) + a ribonucleoside 5'-triphosphate = RNA(n+1) + diphosphate. In terms of biological role, DNA-dependent RNA polymerase catalyzes the transcription of DNA into RNA using the four ribonucleoside triphosphates as substrates. The chain is DNA-directed RNA polymerase subunit beta from Shewanella sediminis (strain HAW-EB3).